The following is a 245-amino-acid chain: Folate receptor gamma (245 aa).

The signal sequence occupies residues 1–22 (MDMAWQMMQLLLLALVTAAGSA). 8 disulfide bridges follow: Cys-37/Cys-65, Cys-57/Cys-105, Cys-66/Cys-109, Cys-89/Cys-175, Cys-96/Cys-146, Cys-135/Cys-209, Cys-139/Cys-189, and Cys-152/Cys-169. Folate is bound by residues Asp-103 and Tyr-107. Asn-121 carries N-linked (GlcNAc...) asparagine glycosylation. Folate contacts are provided by residues 124-128 (WRKER), 157-162 (HKGWNW), and Ser-196. N-linked (GlcNAc...) asparagine glycosylation is present at Asn-161. A glycan (N-linked (GlcNAc...) asparagine) is linked at Asn-201.

The protein belongs to the folate receptor family. As to expression, spleen, thymus, bone marrow, ovarian carcinoma, and uterine carcinoma.

The protein localises to the secreted. Its function is as follows. Binds to folate and reduced folic acid derivatives and mediates delivery of 5-methyltetrahydrofolate to the interior of cells. Isoform Short does not bind folate. The protein is Folate receptor gamma (FOLR3) of Homo sapiens (Human).